The primary structure comprises 429 residues: Adenylosuccinate synthetase (429 aa).

Residues 12–18 (GDEGKGK) and 40–42 (GHT) each bind GTP. Asp-13 serves as the catalytic Proton acceptor. 2 residues coordinate Mg(2+): Asp-13 and Gly-40. IMP-binding positions include 13–16 (DEGK), 38–41 (NAGH), Thr-128, Arg-142, Gln-223, Thr-238, and Arg-302. The Proton donor role is filled by His-41. Residue 298–304 (TTTGRPR) participates in substrate binding. Residues Arg-304, 330-332 (SID), and 412-414 (SVG) each bind GTP.

This sequence belongs to the adenylosuccinate synthetase family. In terms of assembly, homodimer. Requires Mg(2+) as cofactor.

The protein localises to the cytoplasm. The enzyme catalyses IMP + L-aspartate + GTP = N(6)-(1,2-dicarboxyethyl)-AMP + GDP + phosphate + 2 H(+). Its pathway is purine metabolism; AMP biosynthesis via de novo pathway; AMP from IMP: step 1/2. Plays an important role in the de novo pathway of purine nucleotide biosynthesis. Catalyzes the first committed step in the biosynthesis of AMP from IMP. The polypeptide is Adenylosuccinate synthetase (Exiguobacterium sp. (strain ATCC BAA-1283 / AT1b)).